Here is a 157-residue protein sequence, read N- to C-terminus: Phosphopantetheine adenylyltransferase (157 aa).

Position 8 (threonine 8) interacts with substrate. ATP-binding positions include 8–9 (TF) and histidine 16. Residues lysine 40, threonine 72, and arginine 86 each contribute to the substrate site. ATP contacts are provided by residues 87 to 89 (GLR), glutamate 97, and 122 to 128 (YSFLSSS).

Belongs to the bacterial CoaD family. In terms of assembly, homohexamer. The cofactor is Mg(2+).

The protein localises to the cytoplasm. The catalysed reaction is (R)-4'-phosphopantetheine + ATP + H(+) = 3'-dephospho-CoA + diphosphate. The protein operates within cofactor biosynthesis; coenzyme A biosynthesis; CoA from (R)-pantothenate: step 4/5. In terms of biological role, reversibly transfers an adenylyl group from ATP to 4'-phosphopantetheine, yielding dephospho-CoA (dPCoA) and pyrophosphate. This is Phosphopantetheine adenylyltransferase from Prochlorococcus marinus (strain MIT 9215).